We begin with the raw amino-acid sequence, 404 residues long: Probable tRNA sulfurtransferase (404 aa).

The THUMP domain maps to 60-165 (QPIVEALKLV…DEAAYISYEE (106 aa)). ATP contacts are provided by residues 183–184 (ML), 208–209 (HF), Arg265, Gly287, and Gln296.

Belongs to the ThiI family.

It localises to the cytoplasm. The catalysed reaction is [ThiI sulfur-carrier protein]-S-sulfanyl-L-cysteine + a uridine in tRNA + 2 reduced [2Fe-2S]-[ferredoxin] + ATP + H(+) = [ThiI sulfur-carrier protein]-L-cysteine + a 4-thiouridine in tRNA + 2 oxidized [2Fe-2S]-[ferredoxin] + AMP + diphosphate. The enzyme catalyses [ThiS sulfur-carrier protein]-C-terminal Gly-Gly-AMP + S-sulfanyl-L-cysteinyl-[cysteine desulfurase] + AH2 = [ThiS sulfur-carrier protein]-C-terminal-Gly-aminoethanethioate + L-cysteinyl-[cysteine desulfurase] + A + AMP + 2 H(+). It functions in the pathway cofactor biosynthesis; thiamine diphosphate biosynthesis. Functionally, catalyzes the ATP-dependent transfer of a sulfur to tRNA to produce 4-thiouridine in position 8 of tRNAs, which functions as a near-UV photosensor. Also catalyzes the transfer of sulfur to the sulfur carrier protein ThiS, forming ThiS-thiocarboxylate. This is a step in the synthesis of thiazole, in the thiamine biosynthesis pathway. The sulfur is donated as persulfide by IscS. This Streptococcus pyogenes serotype M12 (strain MGAS2096) protein is Probable tRNA sulfurtransferase.